We begin with the raw amino-acid sequence, 440 residues long: MGILGMRRFIREHELSVHLSIQMERGLYIPIAVDTWNVLTPIMRRLDPGNMMDPVERTLRGIMQVFSLLNKKSCFPIFVLDGGRKRAFKGPVKHDYHNIDHRAPTDGDDLEASANENQPHSLAGNAPRLASGARGAHQSSRRKTALRATPHYKLCWDLITASGFPTVYVKGMEADYGCANLFHTKTVMYVWSSDSDMVFMGCDVITDLTPAFPVAVFSKHVLEYLNMTQREFANTFVDCHTNLHSPETIYSFAAKLLEHRCGSAIDEPPAASEESSASDQQSADEDEHGAWSRYTRRPPRRADAAAWGAGPGGNGQLKGVSVLCGFPSDARPFDCAPARRRRLPQRREEPAARLKKNREFLAYMNSFIGCKVINNRHTLIKRVPIRQETFDPVEIYRILHEYAPTMANKWCAEMLVKCKLKPVPPLRDVAYGKATQINLC.

Disordered regions lie at residues 98-144 and 265-312; these read NIDH…RRKT and IDEP…AGPG. The segment covering 266-281 has biased composition (low complexity); the sequence is DEPPAASEESSASDQQ.

Belongs to the herpesviridae VHS protein family.

It localises to the virion. In terms of biological role, minor structural protein that acts as an endoribonuclease during lytic infection. Degrades host mRNAs in the cytoplasm by cutting them at preferred sites, including some in regions of translation initiation. This chain is Virion host shutoff protein (UL41), found in Amazona oratrix (yellow-headed parrot).